The chain runs to 192 residues: MVLVVGLGNPGKTYESTRHNIGFRVIDALLERRSALNATKSTFKGELHKEGENLFLKPTTYMNLSGESALPVSTFYKPEKILVIHDDLDLPFGAIRLKRGGGNGGHNGLKSLDKLLGNDYYRLRIGIGKPPLGWEVADYVLARFSQEEEQELEERLFPHAKEAIESFLEGKMEWDRLVSRYSLKPSTPKEKV.

Y14 provides a ligand contact to tRNA. H19 functions as the Proton acceptor in the catalytic mechanism. 3 residues coordinate tRNA: Y61, N63, and N107.

The protein belongs to the PTH family. As to quaternary structure, monomer.

It is found in the cytoplasm. It catalyses the reaction an N-acyl-L-alpha-aminoacyl-tRNA + H2O = an N-acyl-L-amino acid + a tRNA + H(+). Its function is as follows. Hydrolyzes ribosome-free peptidyl-tRNAs (with 1 or more amino acids incorporated), which drop off the ribosome during protein synthesis, or as a result of ribosome stalling. Catalyzes the release of premature peptidyl moieties from peptidyl-tRNA molecules trapped in stalled 50S ribosomal subunits, and thus maintains levels of free tRNAs and 50S ribosomes. The chain is Peptidyl-tRNA hydrolase from Wolinella succinogenes (strain ATCC 29543 / DSM 1740 / CCUG 13145 / JCM 31913 / LMG 7466 / NCTC 11488 / FDC 602W) (Vibrio succinogenes).